Here is a 501-residue protein sequence, read N- to C-terminus: Protein disulfide isomerase-like 1-1 (501 aa).

The first 23 residues, 1–23 (MAMRGFTLFSILVLSLCASSIRS), serve as a signal peptide directing secretion. The 118-residue stretch at 24–141 (EETETKEFVL…IVTYLKKQSG (118 aa)) folds into the Thioredoxin 1 domain. N-linked (GlcNAc...) asparagine glycosylation occurs at asparagine 39. Residues cysteine 59 and cysteine 62 each act as nucleophile in the active site. Cysteine 59 and cysteine 62 are oxidised to a cystine. Residue asparagine 275 is glycosylated (N-linked (GlcNAc...) asparagine). The Thioredoxin 2 domain maps to 354-482 (FKDGKIAPHK…FISFVDKNKD (129 aa)). Catalysis depends on nucleophile residues cysteine 404 and cysteine 407. A disulfide bridge connects residues cysteine 404 and cysteine 407. A Prevents secretion from ER motif is present at residues 498–501 (KDEL).

The protein belongs to the protein disulfide isomerase family. Interacts with RD21A, At3g19390, At5g43060. Highly expressed in flowers, stems and immature seeds, and at lower levels in leaves and siliques (at protein level).

It is found in the endoplasmic reticulum lumen. The protein resides in the vacuole. The enzyme catalyses Catalyzes the rearrangement of -S-S- bonds in proteins.. In terms of biological role, protein disulfide isomerase that associates with RD21A protease for trafficking from the ER through the Golgi to lytic and protein storage vacuoles of endothelial cells in developing seeds. Regulates the timing of programmed cell death (PCD) of the endothelial cells by chaperoning and inhibiting cysteine proteases during their trafficking to vacuoles. This Arabidopsis thaliana (Mouse-ear cress) protein is Protein disulfide isomerase-like 1-1 (PDIL1-1).